The primary structure comprises 247 residues: Carboxy-S-adenosyl-L-methionine synthase (247 aa).

S-adenosyl-L-methionine contacts are provided by residues Tyr39, 64–66 (GCS), 89–90 (DN), 117–118 (DI), Asn132, and Arg199.

It belongs to the class I-like SAM-binding methyltransferase superfamily. Cx-SAM synthase family. As to quaternary structure, homodimer.

The enzyme catalyses prephenate + S-adenosyl-L-methionine = carboxy-S-adenosyl-L-methionine + 3-phenylpyruvate + H2O. Its function is as follows. Catalyzes the conversion of S-adenosyl-L-methionine (SAM) to carboxy-S-adenosyl-L-methionine (Cx-SAM). The polypeptide is Carboxy-S-adenosyl-L-methionine synthase (Salmonella agona (strain SL483)).